The sequence spans 122 residues: Small ribosomal subunit protein uS13 (122 aa).

Residues 98–122 (VRGQRTHTNARTRKGPAKAIAGKKK) are disordered.

The protein belongs to the universal ribosomal protein uS13 family. As to quaternary structure, part of the 30S ribosomal subunit. Forms a loose heterodimer with protein S19. Forms two bridges to the 50S subunit in the 70S ribosome.

Located at the top of the head of the 30S subunit, it contacts several helices of the 16S rRNA. In the 70S ribosome it contacts the 23S rRNA (bridge B1a) and protein L5 of the 50S subunit (bridge B1b), connecting the 2 subunits; these bridges are implicated in subunit movement. Contacts the tRNAs in the A and P-sites. The sequence is that of Small ribosomal subunit protein uS13 from Ruegeria sp. (strain TM1040) (Silicibacter sp.).